The sequence spans 794 residues: DNA ligase (794 aa).

NAD(+)-binding positions include 35 to 39 (DAEYD), 84 to 85 (SL), and glutamate 126. Residue lysine 128 is the N6-AMP-lysine intermediate of the active site. NAD(+)-binding residues include arginine 149, glutamate 186, lysine 302, and lysine 326. Residues cysteine 420, cysteine 423, cysteine 450, and cysteine 456 each contribute to the Zn(2+) site. The region spanning 711–794 (VEGLPLAGQT…KLFDEHGVAR (84 aa)) is the BRCT domain.

It belongs to the NAD-dependent DNA ligase family. LigA subfamily. It depends on Mg(2+) as a cofactor. Mn(2+) serves as cofactor.

It carries out the reaction NAD(+) + (deoxyribonucleotide)n-3'-hydroxyl + 5'-phospho-(deoxyribonucleotide)m = (deoxyribonucleotide)n+m + AMP + beta-nicotinamide D-nucleotide.. DNA ligase that catalyzes the formation of phosphodiester linkages between 5'-phosphoryl and 3'-hydroxyl groups in double-stranded DNA using NAD as a coenzyme and as the energy source for the reaction. It is essential for DNA replication and repair of damaged DNA. This chain is DNA ligase, found in Pseudomonas aeruginosa (strain LESB58).